Here is a 281-residue protein sequence, read N- to C-terminus: Undecaprenyl-diphosphatase (281 aa).

Transmembrane regions (helical) follow at residues 1–21 (MNVLQGLLLGLIQGLTEFLPI), 45–65 (WTAFIAVIQLGTMAAVLIYFA), 93–113 (SKLGWYVILGSLPVATFGLVF), 125–145 (LIVISASLIVFGILLGVSEVV), 155–175 (ISWLDALVVGFAQVMALVPGA), 195–215 (AARFSFLLSIPAVMASGLLEF), 227–247 (FLVLASATLMSAVSGYLTIAF), and 256–276 (STNVFVVYRVVLGGALLWMVF).

The protein belongs to the UppP family.

It localises to the cell inner membrane. It carries out the reaction di-trans,octa-cis-undecaprenyl diphosphate + H2O = di-trans,octa-cis-undecaprenyl phosphate + phosphate + H(+). Functionally, catalyzes the dephosphorylation of undecaprenyl diphosphate (UPP). Confers resistance to bacitracin. This is Undecaprenyl-diphosphatase from Syntrophobacter fumaroxidans (strain DSM 10017 / MPOB).